The following is a 1192-amino-acid chain: MEDLDQSPLVSSSDSPPRPQPAFKYQFVREPEDEEEEEEEEEEDEDEDLEELEVLERKPAAGLSAAPVPTAPAAGAPLMDFGNDFVPPAPRGPLPAAPPVAPERQPSWDPSPVSSTVPAPSPLSAAAVSPSKLPEDDEPPARPPPPPPASVSPQAEPVWTPPAPAPAAPPSTPAAPKRRGSSGSVDETLFALPAASEPVIRSSAENMDLKEQPGNTISAGQEDFPSVLLETAASLPSLSPLSAASFKEHEYLGNLSTVLPTEGTLQENVSEASKEVSEKAKTLLIDRDLTEFSELEYSEMGSSFSVSPKAESAVIVANPREEIIVKNKDEEEKLVSNNILHNQQELPTALTKLVKEDEVVSSEKAKDSFNEKRVAVEAPMREEYADFKPFERVWEVKDSKEDSDMLAAGGKIESNLESKVDKKCFADSLEQTNHEKDSESSNDDTSFPSTPEGIKDRSGAYITCAPFNPAATESIATNIFPLLGDPTSENKTDEKKIEEKKAQIVTEKNTSTKTSNPFLVAAQDSETDYVTTDNLTKVTEEVVANMPEGLTPDLVQEACESELNEVTGTKIAYETKMDLVQTSEVMQESLYPAAQLCPSFEESEATPSPVLPDIVMEAPLNSAVPSAGASVIQPSSSPLEASSVNYESIKHEPENPPPYEEAMSVSLKKVSGIKEEIKEPENINAALQETEAPYISIACDLIKETKLSAEPAPDFSDYSEMAKVEQPVPDHSELVEDSSPDSEPVDLFSDDSIPDVPQKQDETVMLVKESLTETSFESMIEYENKEKLSALPPEGGKPYLESFKLSLDNTKDTLLPDEVSTLSKKEKIPLQMEELSTAVYSNDDLFISKEAQIRETETFSDSSPIEIIDEFPTLISSKTDSFSKLAREYTDLEVSHKSEIANAPDGAGSLPCTELPHDLSLKNIQPKVEEKISFSDDFSKNGSATSKVLLLPPDVSALATQAEIESIVKPKVLVKEAEKKLPSDTEKEDRSPSAIFSAELSKTSVVDLLYWRDIKKTGVVFGASLFLLLSLTVFSIVSVTAYIALALLSVTISFRIYKGVIQAIQKSDEGHPFRAYLESEVAISEELVQKYSNSALGHVNCTIKELRRLFLVDDLVDSLKFAVLMWVFTYVGALFNGLTLLILALISLFSVPVIYERHQAQIDHYLGLANKNVKDAMAKIQAKIPGLKRKAE.

Position 1 is an N-acetylmethionine (M1). Residues 1–204 are disordered; sequence MEDLDQSPLV…ASEPVIRSSA (204 aa). The Cytoplasmic portion of the chain corresponds to 1 to 1018; that stretch reads MEDLDQSPLV…LYWRDIKKTG (1018 aa). A phosphoserine mark is found at S7 and S15. Acidic residues predominate over residues 31 to 53; it reads PEDEEEEEEEEEEDEDEDLEELE. The segment covering 65–77 has biased composition (low complexity); the sequence is AAPVPTAPAAGAP. The segment covering 87 to 101 has biased composition (pro residues); it reads PPAPRGPLPAAPPVA. S107 carries the post-translational modification Phosphoserine. Low complexity predominate over residues 110 to 132; that stretch reads PSPVSSTVPAPSPLSAAAVSPSK. Positions 141 to 150 are enriched in pro residues; sequence ARPPPPPPAS. S152 bears the Phosphoserine mark. The segment covering 159-173 has biased composition (pro residues); the sequence is WTPPAPAPAAPPSTP. A phosphoserine mark is found at S181, S182, S184, S361, and S446. The tract at residues 427-458 is disordered; it reads DSLEQTNHEKDSESSNDDTSFPSTPEGIKDRS. T450 carries the post-translational modification Phosphothreonine. A Phosphoserine modification is found at S511. The span at 722–734 shows a compositional bias: basic and acidic residues; that stretch reads AKVEQPVPDHSEL. The segment at 722 to 762 is disordered; sequence AKVEQPVPDHSELVEDSSPDSEPVDLFSDDSIPDVPQKQDE. Acidic residues predominate over residues 735–753; the sequence is VEDSSPDSEPVDLFSDDSI. S749 carries the post-translational modification Phosphoserine. T858 carries the post-translational modification Phosphothreonine. Phosphoserine occurs at positions 881 and 991. In terms of domain architecture, Reticulon spans 1005–1192; it reads VVDLLYWRDI…KIPGLKRKAE (188 aa). A helical transmembrane segment spans residues 1019–1039; it reads VVFGASLFLLLSLTVFSIVSV. The Lumenal portion of the chain corresponds to 1040–1133; the sequence is TAYIALALLS…LMWVFTYVGA (94 aa). The residue at position 1104 (K1104) is an N6-acetyllysine. A helical membrane pass occupies residues 1134–1154; it reads LFNGLTLLILALISLFSVPVI. The Cytoplasmic portion of the chain corresponds to 1155–1192; the sequence is YERHQAQIDHYLGLANKNVKDAMAKIQAKIPGLKRKAE.

In terms of assembly, binds to RTN4R. Interacts with ATL1. Interacts with TMEM170A. Interacts with RTN4IP1. Interacts in trans with CNTNAP1. Interacts with REEP5. Interacts with synaptic plasticity regulator PANTS; the interaction results in enhanced RTN4-mediated inhibition of AMPA receptor clustering. Interacts with GPR50. As to quaternary structure, homodimer. Interacts with BAD/Bcl-xl and BCL2. Interact with RTN3. Interacts with NGBR. Interacts with SPTLC1. Interacts with GRAMD4. Interacts with CDH5. Interacts with BACE1 and BACE2. Interacts with REEP5. Interacts with RETREG3. In terms of assembly, interacts with BACE1 and BACE2. Interacts with TMEM33. In terms of tissue distribution, isoform A: is specifically expressed in brain and testis and weakly in heart and skeletal muscle. Isoform B: widely expressed except for the liver. Highly expressed in endothelial cells and vascular smooth muscle cells, including blood vessels and mesenteric arteries. Isoform C: is expressed in brain, skeletal muscle and adipocytes. Isoform D is testis-specific.

The protein resides in the endoplasmic reticulum membrane. It is found in the cell membrane. The protein localises to the synapse. Its subcellular location is the cell junction. Required to induce the formation and stabilization of endoplasmic reticulum (ER) tubules. They regulate membrane morphogenesis in the ER by promoting tubular ER production. They influence nuclear envelope expansion, nuclear pore complex formation and proper localization of inner nuclear membrane proteins. However each isoform have specific functions mainly depending on their tissue expression specificities. In terms of biological role, developmental neurite growth regulatory factor with a role as a negative regulator of axon-axon adhesion and growth, and as a facilitator of neurite branching. Regulates neurite fasciculation, branching and extension in the developing nervous system. Involved in down-regulation of growth, stabilization of wiring and restriction of plasticity in the adult CNS. Regulates the radial migration of cortical neurons via an RTN4R-LINGO1 containing receptor complex. Acts as a negative regulator of central nervous system angiogenesis. Inhibits spreading, migration and sprouting of primary brain microvascular endothelial cells (MVECs). Also induces the retraction of MVECs lamellipodia and filopodia in a ROCK pathway-dependent manner. Its function is as follows. Mainly function in endothelial cells and vascular smooth muscle cells, is also involved in immune system regulation. Modulator of vascular remodeling, promotes the migration of endothelial cells but inhibits the migration of vascular smooth muscle cells. Regulates endothelial sphingolipid biosynthesis with direct effects on vascular function and blood pressure. Inhibits serine palmitoyltransferase, SPTLC1, the rate-limiting enzyme of the novo sphingolipid biosynthetic pathway, thereby controlling production of endothelial sphingosine-1-phosphate (S1P). Required to promote macrophage homing and functions such as cytokine/chemokine gene expression involved in angiogenesis, arteriogenesis and tissue repair. Mediates ICAM1 induced transendothelial migration of leukocytes such as monocytes and neutrophils and acute inflammation. Necessary for immune responses triggered by nucleic acid sensing TLRs, such as TLR9, is required for proper TLR9 location to endolysosomes. Also involved in immune response to LPS. Plays a role in liver regeneration through the modulation of hepatocytes proliferation. Reduces the anti-apoptotic activity of Bcl-xl and Bcl-2. This is likely consecutive to their change in subcellular location, from the mitochondria to the endoplasmic reticulum, after binding and sequestration. With isoform C, inhibits BACE1 activity and amyloid precursor protein processing. Functionally, regulates cardiomyocyte apoptosis upon hypoxic conditions. With isoform B, inhibits BACE1 activity and amyloid precursor protein processing. In Homo sapiens (Human), this protein is Reticulon-4.